Consider the following 944-residue polypeptide: UvrABC system protein A (944 aa).

Gly33–Ser40 contacts ATP. Residues Cys252 to Cys279 form a C4-type zinc finger. ABC transporter domains follow at residues Trp309–Leu587 and Ile607–Lys935. Residue Gly639 to Ser646 participates in ATP binding. The C4-type zinc-finger motif lies at Cys738 to Cys764.

Belongs to the ABC transporter superfamily. UvrA family. As to quaternary structure, forms a heterotetramer with UvrB during the search for lesions.

It is found in the cytoplasm. Its function is as follows. The UvrABC repair system catalyzes the recognition and processing of DNA lesions. UvrA is an ATPase and a DNA-binding protein. A damage recognition complex composed of 2 UvrA and 2 UvrB subunits scans DNA for abnormalities. When the presence of a lesion has been verified by UvrB, the UvrA molecules dissociate. This chain is UvrABC system protein A, found in Staphylococcus epidermidis (strain ATCC 35984 / DSM 28319 / BCRC 17069 / CCUG 31568 / BM 3577 / RP62A).